Here is an 88-residue protein sequence, read N- to C-terminus: L-amino-acid oxidase (88 aa).

FAD contacts are provided by residues E74 and 81–86 (GWIDST). 81–82 (GW) contacts substrate.

It belongs to the flavin monoamine oxidase family. FIG1 subfamily. Homodimer; non-covalently linked. FAD serves as cofactor. In terms of processing, N-glycosylated. In terms of tissue distribution, expressed by the venom gland.

The protein resides in the secreted. The enzyme catalyses an L-alpha-amino acid + O2 + H2O = a 2-oxocarboxylate + H2O2 + NH4(+). The catalysed reaction is L-leucine + O2 + H2O = 4-methyl-2-oxopentanoate + H2O2 + NH4(+). It catalyses the reaction L-phenylalanine + O2 + H2O = 3-phenylpyruvate + H2O2 + NH4(+). It carries out the reaction L-tryptophan + O2 + H2O = indole-3-pyruvate + H2O2 + NH4(+). The enzyme catalyses L-methionine + O2 + H2O = 4-methylsulfanyl-2-oxobutanoate + H2O2 + NH4(+). The catalysed reaction is L-isoleucine + O2 + H2O = (S)-3-methyl-2-oxopentanoate + H2O2 + NH4(+). It catalyses the reaction L-arginine + O2 + H2O = 5-guanidino-2-oxopentanoate + H2O2 + NH4(+). It carries out the reaction L-histidine + O2 + H2O = 3-(imidazol-5-yl)pyruvate + H2O2 + NH4(+). The enzyme catalyses L-asparagine + O2 + H2O = 2-oxosuccinamate + H2O2 + NH4(+). The catalysed reaction is L-valine + O2 + H2O = 3-methyl-2-oxobutanoate + H2O2 + NH4(+). It catalyses the reaction L-glutamate + O2 + H2O = H2O2 + 2-oxoglutarate + NH4(+). Its function is as follows. Catalyzes an oxidative deamination of predominantly hydrophobic and aromatic L-amino acids, thus producing hydrogen peroxide that may contribute to the diverse toxic effects of this enzyme. Is highly active on L-Met, L-Leu, L-Phe, L-Ile, and L-Arg, moderately active on L-His, L-Trp, L-Asn, L-Glu, and L-Val, and weakly or not active on L-Gln, L-Lys, L-Asp, L-Ala, L-Tyr, L-Ser, L-Pro, L-Gly, L-Thr, and L-Cys. Exhibits diverse biological activities, such as hemorrhage, hemolysis, edema, apoptosis of vascular endothelial cells or tumor cell lines, antibacterial and antiparasitic activities. In addition, this protein has an ability to induce apoptosis in cultured HeLa and K562 cells, and inhibits ADP-induced platelet aggregation dose-dependently. Effects of snake L-amino oxidases on platelets are controversial, since they either induce aggregation or inhibit agonist-induced aggregation. These different effects are probably due to different experimental conditions. The sequence is that of L-amino-acid oxidase from Vipera berus berus (Common viper).